Here is a 246-residue protein sequence, read N- to C-terminus: Probable transcriptional regulatory protein Dole_0371 (246 aa).

It belongs to the TACO1 family.

The protein resides in the cytoplasm. The protein is Probable transcriptional regulatory protein Dole_0371 of Desulfosudis oleivorans (strain DSM 6200 / JCM 39069 / Hxd3) (Desulfococcus oleovorans).